The chain runs to 328 residues: Sulfate adenylyltransferase subunit 2 (328 aa).

Disordered regions lie at residues 15 to 34 (AAPD…PSSH) and 304 to 328 (SERE…EGYF).

It belongs to the PAPS reductase family. CysD subfamily. In terms of assembly, heterodimer composed of CysD, the smaller subunit, and CysN.

The catalysed reaction is sulfate + ATP + H(+) = adenosine 5'-phosphosulfate + diphosphate. It functions in the pathway sulfur metabolism; hydrogen sulfide biosynthesis; sulfite from sulfate: step 1/3. Functionally, with CysN forms the ATP sulfurylase (ATPS) that catalyzes the adenylation of sulfate producing adenosine 5'-phosphosulfate (APS) and diphosphate, the first enzymatic step in sulfur assimilation pathway. APS synthesis involves the formation of a high-energy phosphoric-sulfuric acid anhydride bond driven by GTP hydrolysis by CysN coupled to ATP hydrolysis by CysD. This is Sulfate adenylyltransferase subunit 2 from Rhodopseudomonas palustris (strain BisA53).